A 201-amino-acid chain; its full sequence is Molybdenum cofactor guanylyltransferase (201 aa).

GTP is bound by residues 15 to 17 (LCG), lysine 28, aspartate 74, and aspartate 104. Mg(2+) is bound at residue aspartate 104.

It belongs to the MobA family. As to quaternary structure, monomer. Mg(2+) is required as a cofactor.

It is found in the cytoplasm. It carries out the reaction Mo-molybdopterin + GTP + H(+) = Mo-molybdopterin guanine dinucleotide + diphosphate. Functionally, transfers a GMP moiety from GTP to Mo-molybdopterin (Mo-MPT) cofactor (Moco or molybdenum cofactor) to form Mo-molybdopterin guanine dinucleotide (Mo-MGD) cofactor. The sequence is that of Molybdenum cofactor guanylyltransferase from Ectopseudomonas mendocina (strain ymp) (Pseudomonas mendocina).